The primary structure comprises 201 residues: MAEKFTQHTGLVVPLDAANVDTDAIIPKQFLQKVTRTGFGAHLFNDWRFLDDQGQQPNPEFVLNFPEFKGASILLTRENFGCGSSREHAPWALTDYGFKVVIAPSFADIFYGNSFNNQLLPVTLSDAQVDEMFALVKANPGITFEVDLEAEVVKAGDKTYAFSIDAFRRHCMINGLDSIGLTLQHEDAIAAYENKQPAFMN.

Belongs to the LeuD family. LeuD type 1 subfamily. As to quaternary structure, heterodimer of LeuC and LeuD.

The enzyme catalyses (2R,3S)-3-isopropylmalate = (2S)-2-isopropylmalate. The protein operates within amino-acid biosynthesis; L-leucine biosynthesis; L-leucine from 3-methyl-2-oxobutanoate: step 2/4. Its function is as follows. Catalyzes the isomerization between 2-isopropylmalate and 3-isopropylmalate, via the formation of 2-isopropylmaleate. The chain is 3-isopropylmalate dehydratase small subunit from Enterobacter sp. (strain 638).